Reading from the N-terminus, the 173-residue chain is Placenta-specific protein 1 (173 aa).

The signal sequence occupies residues 1 to 23 (MKLIKFLGGVVFFTLMFSGYSEQ).

It belongs to the PLAC1 family.

The protein resides in the secreted. Functionally, may play a role in placental development. The chain is Placenta-specific protein 1 from Rattus norvegicus (Rat).